We begin with the raw amino-acid sequence, 366 residues long: Histidinol-phosphate aminotransferase 2 (366 aa).

A compositionally biased stretch (polar residues) spans Met-1–Gln-11. Residues Met-1–Gln-21 form a disordered region. Lys-222 is subject to N6-(pyridoxal phosphate)lysine.

Belongs to the class-II pyridoxal-phosphate-dependent aminotransferase family. Histidinol-phosphate aminotransferase subfamily. As to quaternary structure, homodimer. The cofactor is pyridoxal 5'-phosphate.

It carries out the reaction L-histidinol phosphate + 2-oxoglutarate = 3-(imidazol-4-yl)-2-oxopropyl phosphate + L-glutamate. It participates in amino-acid biosynthesis; L-histidine biosynthesis; L-histidine from 5-phospho-alpha-D-ribose 1-diphosphate: step 7/9. This is Histidinol-phosphate aminotransferase 2 from Bacillus thuringiensis subsp. konkukian (strain 97-27).